A 198-amino-acid chain; its full sequence is Cytochrome c oxidase assembly protein CtaG (198 aa).

Topologically, residues 1–12 (MADTGQSDRKER) are cytoplasmic. The helical; Signal-anchor for type II membrane protein transmembrane segment at 13 to 35 (SNGVIVGTCLAFVVGMVGMAYAA) threads the bilayer. The Periplasmic segment spans residues 36–198 (VPLYDMFCRV…QVKSRTENKL (163 aa)).

The protein belongs to the COX11/CtaG family.

The protein resides in the cell inner membrane. Its function is as follows. Exerts its effect at some terminal stage of cytochrome c oxidase synthesis, probably by being involved in the insertion of the copper B into subunit I. In Sinorhizobium medicae (strain WSM419) (Ensifer medicae), this protein is Cytochrome c oxidase assembly protein CtaG.